Consider the following 878-residue polypeptide: DNA gyrase subunit A (878 aa).

The 500-residue stretch at 34–533 (LPDVRDGLKP…NSADINIEDL (500 aa)) folds into the Topo IIA-type catalytic domain. Tyr122 serves as the catalytic O-(5'-phospho-DNA)-tyrosine intermediate. The GyrA-box signature appears at 560–566 (QRRGGKG). A disordered region spans residues 844 to 878 (DDEELDAIDGSVAEGDEDIAPEAESDDDVADDADE). Acidic residues predominate over residues 857–878 (EGDEDIAPEAESDDDVADDADE).

The protein belongs to the type II topoisomerase GyrA/ParC subunit family. Heterotetramer, composed of two GyrA and two GyrB chains. In the heterotetramer, GyrA contains the active site tyrosine that forms a transient covalent intermediate with DNA, while GyrB binds cofactors and catalyzes ATP hydrolysis.

It is found in the cytoplasm. It carries out the reaction ATP-dependent breakage, passage and rejoining of double-stranded DNA.. In terms of biological role, a type II topoisomerase that negatively supercoils closed circular double-stranded (ds) DNA in an ATP-dependent manner to modulate DNA topology and maintain chromosomes in an underwound state, and also catalyzes the interconversion of other topological isomers of double-stranded DNA rings, including catenanes and knotted rings. Replenishes negative supercoiling downstream of highly transcribed genes to help control overall chromosomal supercoiling density. E.coli makes 15% more negative supercoils in pBR322 plasmid DNA than S.typhimurium; the S.typhimurium GyrB subunit is toxic in E.coli, while the E.coli copy can be expressed in S.typhimurium even though the 2 subunits have 777/804 residues identical. Negative supercoiling favors strand separation, and DNA replication, transcription, recombination and repair, all of which involve strand separation. Type II topoisomerases break and join 2 DNA strands simultaneously in an ATP-dependent manner. This is DNA gyrase subunit A from Salmonella typhimurium (strain LT2 / SGSC1412 / ATCC 700720).